A 938-amino-acid polypeptide reads, in one-letter code: Isoleucine--tRNA ligase (938 aa).

The 'HIGH' region signature appears at 65–75 (PYANGSIHIGH). E568 is an L-isoleucyl-5'-AMP binding site. The 'KMSKS' region signature appears at 609–613 (KMSKS). ATP is bound at residue K612. Zn(2+)-binding residues include C905, C908, C921, and C924.

Belongs to the class-I aminoacyl-tRNA synthetase family. IleS type 1 subfamily. Monomer. Zn(2+) is required as a cofactor.

It localises to the cytoplasm. The enzyme catalyses tRNA(Ile) + L-isoleucine + ATP = L-isoleucyl-tRNA(Ile) + AMP + diphosphate. Functionally, catalyzes the attachment of isoleucine to tRNA(Ile). As IleRS can inadvertently accommodate and process structurally similar amino acids such as valine, to avoid such errors it has two additional distinct tRNA(Ile)-dependent editing activities. One activity is designated as 'pretransfer' editing and involves the hydrolysis of activated Val-AMP. The other activity is designated 'posttransfer' editing and involves deacylation of mischarged Val-tRNA(Ile). The chain is Isoleucine--tRNA ligase from Mannheimia succiniciproducens (strain KCTC 0769BP / MBEL55E).